Reading from the N-terminus, the 873-residue chain is Nonsense-mediated mRNA decay factor SMG8 (873 aa).

A disordered region spans residues 531–604 (AKKMAQREDE…ESMASKTERE (74 aa)). Acidic residues predominate over residues 540 to 550 (ELAEEDTDLDI). Low complexity-rich tracts occupy residues 551–562 (PESLLDPDSTSP) and 574–583 (SSSESSSQES). Positions 591-604 (SRRDESMASKTERE) are enriched in basic and acidic residues.

The protein belongs to the SMG8 family.

Involved in nonsense-mediated decay (NMD) of mRNAs containing premature stop codons. Probable component of kinase complex containing smg-1 and recruited to stalled ribosomes. The sequence is that of Nonsense-mediated mRNA decay factor SMG8 (smg-8) from Caenorhabditis elegans.